Reading from the N-terminus, the 552-residue chain is Protein TRM32 (552 aa).

The tract at residues 295-379 (TDLPRDSSTS…NKTAEKTETL (85 aa)) is disordered. Residues 331–351 (VRAEKEEKYEVQEERSQENHL) are compositionally biased toward basic and acidic residues. Positions 352 to 371 (DSSNQRILQQEPDSVPSTNK) are enriched in polar residues.

In Arabidopsis thaliana (Mouse-ear cress), this protein is Protein TRM32 (TRM32).